Here is an 89-residue protein sequence, read N- to C-terminus: Mu-theraphotoxin-Phlo1a (89 aa).

The N-terminal stretch at 1 to 22 (MKVSVLITLAVLGVMFVWTSAA) is a signal peptide. The propeptide occupies 23 to 52 (EQEDHGSDRRDSPALLKNLLGEEVFQSEER). Intrachain disulfides connect cysteine 54-cysteine 68, cysteine 61-cysteine 73, and cysteine 67-cysteine 81. Isoleucine 87 carries the post-translational modification Isoleucine amide.

The protein belongs to the neurotoxin 10 (Hwtx-1) family. 39 (Jztx-34) subfamily. In terms of tissue distribution, expressed by the venom gland.

It localises to the secreted. Gating-modifier toxin that inhibits voltage-gated sodium channel Nav by shifting the threshold for channel activation to more positive potentials. This toxin moderately inhibits human Nav1.7/SCN9A (IC(50)=459 nM) and weakly inhibits hNav1.2/SCN2A and hNav1.5/SCN5A (&lt;20% inhibition at 1 uM peptide). Inhibition of Nav1.7 is voltage-dependent, with lower inhibition at more positive test pulses. This Phlogius sp. (Tarantula spider) protein is Mu-theraphotoxin-Phlo1a.